The sequence spans 323 residues: MGYYLVTGVAGFIGWRVGEFLLKEGKAVLGVDNLNDAYDVTLKYWRLNELKKSENFKFYQIDITNFQALKTIFETYSISAVIHLAARAGVRASLENPWVYVDSNITGTLNLLELMKDFGVKKLVLASTSSIYAGQSPPFHEDLKVDTPLSPYAATKKGAELLSYTYHHLYGLDISVVRYFTVYGPAGRPDMSIFRFIKWIYEEKPIKIFGDGTQARDFTYIDDIARGTIASLKPLGYEIINLGGGKNPISINQIIEILERLIGKKAKREYLNFHKADVKVTWADISKAKKLLNWEPEISIEEGLKRTVNWSKENIELIKSIKV.

11–13 (GFI) contacts NAD(+). The active-site Proton acceptor is the Tyr152. Lys156 is an NAD(+) binding site.

The protein belongs to the NAD(P)-dependent epimerase/dehydratase family. It depends on NAD(+) as a cofactor.

It catalyses the reaction UDP-alpha-D-glucuronate = UDP-alpha-D-galacturonate. Functionally, catalyzes the interconversion of UDP-D-glucuronic acid (UDP-GlcA) and UDP-D-galacturonic acid (UDP-GalA). The protein is UDP-glucuronate 4-epimerase of Thermodesulfobacterium geofontis (strain OPF15).